The primary structure comprises 150 residues: D-aminoacyl-tRNA deacylase (150 aa).

A Gly-cisPro motif, important for rejection of L-amino acids motif is present at residues 136–137 (GP).

Belongs to the DTD family. Homodimer.

It localises to the cytoplasm. It carries out the reaction glycyl-tRNA(Ala) + H2O = tRNA(Ala) + glycine + H(+). The catalysed reaction is a D-aminoacyl-tRNA + H2O = a tRNA + a D-alpha-amino acid + H(+). An aminoacyl-tRNA editing enzyme that deacylates mischarged D-aminoacyl-tRNAs. Also deacylates mischarged glycyl-tRNA(Ala), protecting cells against glycine mischarging by AlaRS. Acts via tRNA-based rather than protein-based catalysis; rejects L-amino acids rather than detecting D-amino acids in the active site. By recycling D-aminoacyl-tRNA to D-amino acids and free tRNA molecules, this enzyme counteracts the toxicity associated with the formation of D-aminoacyl-tRNA entities in vivo and helps enforce protein L-homochirality. This is D-aminoacyl-tRNA deacylase from Staphylococcus carnosus (strain TM300).